We begin with the raw amino-acid sequence, 252 residues long: Imidazole glycerol phosphate synthase subunit HisF (252 aa).

Active-site residues include Asp11 and Asp130.

The protein belongs to the HisA/HisF family. Heterodimer of HisH and HisF.

The protein resides in the cytoplasm. The catalysed reaction is 5-[(5-phospho-1-deoxy-D-ribulos-1-ylimino)methylamino]-1-(5-phospho-beta-D-ribosyl)imidazole-4-carboxamide + L-glutamine = D-erythro-1-(imidazol-4-yl)glycerol 3-phosphate + 5-amino-1-(5-phospho-beta-D-ribosyl)imidazole-4-carboxamide + L-glutamate + H(+). It functions in the pathway amino-acid biosynthesis; L-histidine biosynthesis; L-histidine from 5-phospho-alpha-D-ribose 1-diphosphate: step 5/9. IGPS catalyzes the conversion of PRFAR and glutamine to IGP, AICAR and glutamate. The HisF subunit catalyzes the cyclization activity that produces IGP and AICAR from PRFAR using the ammonia provided by the HisH subunit. The protein is Imidazole glycerol phosphate synthase subunit HisF of Hydrogenobaculum sp. (strain Y04AAS1).